We begin with the raw amino-acid sequence, 426 residues long: Pyrophosphate--fructose 6-phosphate 1-phosphotransferase 1 (426 aa).

Position 15 (glycine 15) interacts with diphosphate. Residue aspartate 114 participates in Mg(2+) binding. Substrate is bound by residues 140-142 (TID), 186-188 (MGR), glutamate 247, and 308-311 (YELR). Catalysis depends on aspartate 142, which acts as the Proton acceptor.

This sequence belongs to the phosphofructokinase type A (PFKA) family. PPi-dependent PFK group II subfamily. Clade 'Short' sub-subfamily. In terms of assembly, homotetramer. The cofactor is Mg(2+).

The protein localises to the cytoplasm. It carries out the reaction beta-D-fructose 6-phosphate + diphosphate = beta-D-fructose 1,6-bisphosphate + phosphate + H(+). It functions in the pathway carbohydrate degradation; glycolysis; D-glyceraldehyde 3-phosphate and glycerone phosphate from D-glucose: step 3/4. Its activity is regulated as follows. Non-allosteric. Catalyzes the phosphorylation of D-fructose 6-phosphate, the first committing step of glycolysis. Uses inorganic phosphate (PPi) as phosphoryl donor instead of ATP like common ATP-dependent phosphofructokinases (ATP-PFKs), which renders the reaction reversible, and can thus function both in glycolysis and gluconeogenesis. Consistently, PPi-PFK can replace the enzymes of both the forward (ATP-PFK) and reverse (fructose-bisphosphatase (FBPase)) reactions. In Trichomonas vaginalis (strain ATCC PRA-98 / G3), this protein is Pyrophosphate--fructose 6-phosphate 1-phosphotransferase 1 (Pfk1).